Reading from the N-terminus, the 289-residue chain is Protease HtpX (289 aa).

Helical transmembrane passes span 4-24 and 36-56; these read IMLFLATNLAVVLVLSVVLNI and LSGLLVMAAVFGFGGAFISLM. Residue H143 participates in Zn(2+) binding. E144 is a catalytic residue. H147 contacts Zn(2+). The next 2 helical transmembrane spans lie at 158–178 and 192–212; these read LMQGVVNTFVIFLSRFIANIV and MVYFGVSMVLELVFGFLASFL. Position 221 (E221) interacts with Zn(2+).

Belongs to the peptidase M48B family. It depends on Zn(2+) as a cofactor.

Its subcellular location is the cell inner membrane. The polypeptide is Protease HtpX (Vibrio campbellii (strain ATCC BAA-1116)).